A 428-amino-acid polypeptide reads, in one-letter code: Enolase (428 aa).

Residue Gln165 participates in (2R)-2-phosphoglycerate binding. The Proton donor role is filled by Glu207. Mg(2+) contacts are provided by Asp244, Glu285, and Asp312. Lys337, Arg366, Ser367, and Lys388 together coordinate (2R)-2-phosphoglycerate. Lys337 (proton acceptor) is an active-site residue.

It belongs to the enolase family. Component of the RNA degradosome, a multiprotein complex involved in RNA processing and mRNA degradation. The cofactor is Mg(2+).

The protein resides in the cytoplasm. It is found in the secreted. Its subcellular location is the cell surface. It carries out the reaction (2R)-2-phosphoglycerate = phosphoenolpyruvate + H2O. It functions in the pathway carbohydrate degradation; glycolysis; pyruvate from D-glyceraldehyde 3-phosphate: step 4/5. In terms of biological role, catalyzes the reversible conversion of 2-phosphoglycerate (2-PG) into phosphoenolpyruvate (PEP). It is essential for the degradation of carbohydrates via glycolysis. The chain is Enolase from Coxiella burnetii (strain Dugway 5J108-111).